The primary structure comprises 273 residues: Cell division cycle-associated protein 3 (273 aa).

Disordered stretches follow at residues 1-231 (MGST…ALSE) and 251-273 (GGGA…LMES). A phosphoserine mark is found at S29 and S31. Over residues 32–45 (AGIQRTPIQVESSP) the composition is skewed to polar residues. T37 bears the Phosphothreonine mark. Phosphoserine is present on residues S44 and S67. T75 bears the Phosphothreonine mark. The F-box-like stretch occupies residues 90–124 (KELSEVFETEVSETEVSESISSPVLGLPQETPLSS). S93 is subject to Phosphoserine. Acidic residues predominate over residues 94–105 (EVFETEVSETEV). 2 stretches are compositionally biased toward polar residues: residues 144–154 (PWSQTELNSKQ) and 164–175 (STETMVSGQTSD). Residue S204 is modified to Phosphoserine. Position 207 is a phosphothreonine (T207). Residues 210–220 (QDDNSPGTLTL) are compositionally biased toward polar residues. S214 carries the post-translational modification Phosphoserine. T217 bears the Phosphothreonine mark. Residues 263-265 (KEN) carry the KEN box motif.

As to quaternary structure, interacts with SKP1. Part of a SCF (SKP1-cullin-F-box) protein ligase complex. Post-translationally, ubiquitinated and degraded by the APC/C-Cdh1 complex.

Its subcellular location is the cytoplasm. The protein resides in the cytosol. It participates in protein modification; protein ubiquitination. F-box-like protein which is required for entry into mitosis. Acts by participating in E3 ligase complexes that mediate the ubiquitination and degradation of WEE1 kinase at G2/M phase. In Rattus norvegicus (Rat), this protein is Cell division cycle-associated protein 3 (Cdca3).